An 822-amino-acid polypeptide reads, in one-letter code: Pentatricopeptide repeat-containing protein At2g41720 (822 aa).

Positions 1–28 are disordered; sequence MATVTNFKLVTPPESSRADKPGATKASD. 19 PPR repeats span residues 106–136, 142–176, 177–211, 212–246, 247–281, 282–316, 319–353, 354–388, 389–423, 424–458, 459–493, 494–528, 529–563, 564–598, 599–633, 634–668, 669–699, 704–738, and 739–773; these read ARKN…MKIQ, RNDI…SCKP, DAET…AIAP, SRST…GVGP, DLVT…KVRP, DTTT…RAEC, DVVT…GLKP, NIVS…GIIP, DVVS…RRKP, NVVT…GIKP, NVVS…GINL, NTAA…KVKA, DSVT…SIPL, TKEV…GCEP, DVIA…GIEP, DSIA…EIPF, TGAV…MDPY, SIGL…GVGI, and NLKT…GIQP.

This sequence belongs to the PPR family. P subfamily.

This is Pentatricopeptide repeat-containing protein At2g41720 (EMB2654) from Arabidopsis thaliana (Mouse-ear cress).